Consider the following 145-residue polypeptide: Large ribosomal subunit protein uL11 (145 aa).

Belongs to the universal ribosomal protein uL11 family. In terms of assembly, part of the ribosomal stalk of the 50S ribosomal subunit. Interacts with L10 and the large rRNA to form the base of the stalk. L10 forms an elongated spine to which L12 dimers bind in a sequential fashion forming a multimeric L10(L12)X complex. In terms of processing, one or more lysine residues are methylated.

Its function is as follows. Forms part of the ribosomal stalk which helps the ribosome interact with GTP-bound translation factors. In Rickettsia massiliae (strain Mtu5), this protein is Large ribosomal subunit protein uL11.